Consider the following 152-residue polypeptide: Ribonuclease pancreatic beta-type (152 aa).

A signal peptide spans 1–25 (MGLXKSFALFSLLVLVLGWVQPSLS). Residues 25–53 (SGESRESSADKFKRQHMDPDSPSKSSPTY) form a disordered region. The segment covering 27–45 (ESRESSADKFKRQHMDPDS) has biased composition (basic and acidic residues). 2 residues coordinate substrate: K35 and R38. The active-site Proton acceptor is H40. 4 cysteine pairs are disulfide-bonded: C54–C112, C68–C123, C86–C138, and C93–C100. Substrate-binding positions include 69 to 73 (KRVNT) and K94. H147 serves as the catalytic Proton donor.

It belongs to the pancreatic ribonuclease family. As to quaternary structure, monomer.

It is found in the secreted. It carries out the reaction an [RNA] containing cytidine + H2O = an [RNA]-3'-cytidine-3'-phosphate + a 5'-hydroxy-ribonucleotide-3'-[RNA].. It catalyses the reaction an [RNA] containing uridine + H2O = an [RNA]-3'-uridine-3'-phosphate + a 5'-hydroxy-ribonucleotide-3'-[RNA].. Endonuclease that catalyzes the cleavage of RNA on the 3' side of pyrimidine nucleotides. Acts on single-stranded and double-stranded RNA. This Rattus tiomanicus (Malayan field rat) protein is Ribonuclease pancreatic beta-type.